The chain runs to 261 residues: Calcium-binding protein 8 (261 aa).

The interval 1 to 41 (MRLPEQPGDGKPENETKGDQETPERGEEPRRSPAPDFPTWE) is disordered. Over 1–234 (MRLPEQPGDG…QNRQTCVRKS (234 aa)) the chain is Cytoplasmic. A compositionally biased stretch (basic and acidic residues) spans 8–33 (GDGKPENETKGDQETPERGEEPRRSP). 2 consecutive EF-hand domains span residues 78–113 (EELDEIREAFRVLDRDGNGFISKQELGMAMRSLGYM) and 114–149 (PSEVELAIIMQRLDMDGDGQVDFDEFMTILGPKLVS). The Ca(2+) site is built by aspartate 91, aspartate 93, asparagine 95, glutamate 102, aspartate 127, aspartate 129, aspartate 131, glutamine 133, and glutamate 138. Residues 235 to 255 (LICAFAMAFIISVMLIAANQI) form a helical; Anchor for type IV membrane protein membrane-spanning segment. At 256–261 (LRSGME) the chain is on the extracellular side.

Interacts with PI4KB. This binding competes with FREQ/NCS1 binding in a calcium-dependent manner. As to expression, brain-specific. High expression in the cerebellum, hippocampus, and cortex.

Its subcellular location is the golgi apparatus. It localises to the trans-Golgi network membrane. It is found in the cytoplasm. The protein localises to the perinuclear region. The protein resides in the cell membrane. Its function is as follows. Negatively regulates Golgi-to-plasma membrane trafficking by interacting with PI4KB and inhibiting its activity. May play a role in the physiology of neurons and is potentially important in memory and learning. The polypeptide is Calcium-binding protein 8 (Caln1) (Mus musculus (Mouse)).